A 117-amino-acid chain; its full sequence is UPF0342 protein LEUM_1212 (117 aa).

This sequence belongs to the UPF0342 family.

The sequence is that of UPF0342 protein LEUM_1212 from Leuconostoc mesenteroides subsp. mesenteroides (strain ATCC 8293 / DSM 20343 / BCRC 11652 / CCM 1803 / JCM 6124 / NCDO 523 / NBRC 100496 / NCIMB 8023 / NCTC 12954 / NRRL B-1118 / 37Y).